The primary structure comprises 134 residues: Transcription antitermination protein NusB (134 aa).

The protein belongs to the NusB family.

In terms of biological role, involved in transcription antitermination. Required for transcription of ribosomal RNA (rRNA) genes. Binds specifically to the boxA antiterminator sequence of the ribosomal RNA (rrn) operons. The protein is Transcription antitermination protein NusB of Shewanella frigidimarina (strain NCIMB 400).